The following is a 358-amino-acid chain: Magnesium-protoporphyrin IX monomethyl ester [oxidative] cyclase 3 (358 aa).

It belongs to the AcsF family. It depends on Fe cation as a cofactor.

It catalyses the reaction Mg-protoporphyrin IX 13-monomethyl ester + 3 NADPH + 3 O2 + 2 H(+) = 3,8-divinyl protochlorophyllide a + 3 NADP(+) + 5 H2O. The protein operates within porphyrin-containing compound metabolism; chlorophyll biosynthesis (light-independent). In terms of biological role, catalyzes the formation of the isocyclic ring in chlorophyll biosynthesis. Mediates the cyclase reaction, which results in the formation of divinylprotochlorophyllide (Pchlide) characteristic of all chlorophylls from magnesium-protoporphyrin IX 13-monomethyl ester (MgPMME). The chain is Magnesium-protoporphyrin IX monomethyl ester [oxidative] cyclase 3 from Nostoc sp. (strain PCC 7120 / SAG 25.82 / UTEX 2576).